Consider the following 349-residue polypeptide: Kelch domain-containing protein 9 (349 aa).

Kelch repeat units follow at residues 39–89 (RFYL…PVDG), 91–137 (WLCV…SHTC), and 325–349 (QLYL…LDFI).

In terms of assembly, interacts with CCNA1.

The sequence is that of Kelch domain-containing protein 9 (KLHDC9) from Homo sapiens (Human).